Here is a 270-residue protein sequence, read N- to C-terminus: Putative phosphoenolpyruvate synthase regulatory protein (270 aa).

150–157 lines the ADP pocket; sequence GVSRCGKT.

The protein belongs to the pyruvate, phosphate/water dikinase regulatory protein family. PSRP subfamily.

It carries out the reaction [pyruvate, water dikinase] + ADP = [pyruvate, water dikinase]-phosphate + AMP + H(+). The enzyme catalyses [pyruvate, water dikinase]-phosphate + phosphate + H(+) = [pyruvate, water dikinase] + diphosphate. Its function is as follows. Bifunctional serine/threonine kinase and phosphorylase involved in the regulation of the phosphoenolpyruvate synthase (PEPS) by catalyzing its phosphorylation/dephosphorylation. The protein is Putative phosphoenolpyruvate synthase regulatory protein of Aeromonas hydrophila subsp. hydrophila (strain ATCC 7966 / DSM 30187 / BCRC 13018 / CCUG 14551 / JCM 1027 / KCTC 2358 / NCIMB 9240 / NCTC 8049).